Reading from the N-terminus, the 43-residue chain is Protein PsbN (43 aa).

Residues 7-27 (LIVAIAAVTICITAFAIYTAF) form a helical membrane-spanning segment.

This sequence belongs to the PsbN family.

The protein resides in the cellular thylakoid membrane. May play a role in photosystem I and II biogenesis. The polypeptide is Protein PsbN (Synechococcus sp. (strain JA-2-3B'a(2-13)) (Cyanobacteria bacterium Yellowstone B-Prime)).